A 219-amino-acid chain; its full sequence is MAQKINPLGFRLGTTQSHHSIWFAQPKDYSDGLQEDQKIRDCIQNYIQKNMQISSDSGVEGIARIEIRKRIDLIQVKIYMGFPKLLIEDGTRRIEELQRIVQKEINSVNRKINITITKITKPYGDPNILAEFIAGQLNNRVSFRKAIQKAIELAEQADTKGIRVQIGGRINGGEIARVLWMKEGRVPLQTIRAKIDYCVYTVRTIHGLLGIKIWIFRED.

The KH type-2 domain occupies 43–120 (IQNYIQKNMQ…KINITITKIT (78 aa)).

It belongs to the universal ribosomal protein uS3 family. As to quaternary structure, part of the 30S ribosomal subunit.

The protein resides in the plastid. The protein localises to the chloroplast. The chain is Small ribosomal subunit protein uS3c (rps3) from Oenothera elata subsp. hookeri (Hooker's evening primrose).